Here is a 205-residue protein sequence, read N- to C-terminus: LexA repressor (205 aa).

The H-T-H motif DNA-binding region spans 28–48 (RAEIARRLGFKSANAAEEHLK). Catalysis depends on for autocatalytic cleavage activity residues Ser122 and Lys159.

It belongs to the peptidase S24 family. As to quaternary structure, homodimer.

The catalysed reaction is Hydrolysis of Ala-|-Gly bond in repressor LexA.. Its function is as follows. Represses a number of genes involved in the response to DNA damage (SOS response), including recA and lexA. In the presence of single-stranded DNA, RecA interacts with LexA causing an autocatalytic cleavage which disrupts the DNA-binding part of LexA, leading to derepression of the SOS regulon and eventually DNA repair. The protein is LexA repressor of Shewanella loihica (strain ATCC BAA-1088 / PV-4).